The following is a 535-amino-acid chain: Cytochrome P450 71C3 (535 aa).

The chain crosses the membrane as a helical span at residues 23–43; that stretch reads QTLTLLLIAVPTVLLLLASLA. C475 provides a ligand contact to heme.

Belongs to the cytochrome P450 family. Requires heme as cofactor.

It is found in the membrane. It functions in the pathway secondary metabolite biosynthesis; 2,4-dihydroxy-1,4-benzoxazin-3-one biosynthesis; 2,4-dihydroxy-1,4-benzoxazin-3-one from indoleglycerol phosphate: step 5/5. Catalyzes the conversion of 2-hydroxy-1,4-benzoxazin-3-one (HBOA) to 2,4-dihydroxy-1,4-benzoxazin-3-one (DIBOA). The polypeptide is Cytochrome P450 71C3 (CYP71C3) (Zea mays (Maize)).